The sequence spans 468 residues: Spliceosome-associated protein CWC27 homolog (468 aa).

At Ser2 the chain carries N-acetylserine. Positions 11–166 (TNGKVLLKTT…NPHRIKSCEV (156 aa)) constitute a PPIase cyclophilin-type domain. Disordered stretches follow at residues 204–382 (LLSF…EDQT) and 427–468 (RKVK…KERR). A coiled-coil region spans residues 206–229 (SFGEEAEEEEEEVNRVSQSMKGRS). The segment covering 231-241 (SSHDLLKDDPH) has biased composition (basic and acidic residues). The span at 256–268 (TGDLEDDAEDDSV) shows a compositional bias: acidic residues. Composition is skewed to basic and acidic residues over residues 269–287 (EHDGSMEEDEKNLMRERIA) and 302–342 (GDGE…AEKG). The residue at position 273 (Ser273) is a Phosphoserine. Residues 309–342 (ASRSEELRKEARQLKRELLAAKQKKESATKAEKG) adopt a coiled-coil conformation. At Ser343 the chain carries Phosphoserine. Composition is skewed to basic and acidic residues over residues 356–368 (EYRREKQKYEALR) and 453–468 (RREESKKLLREKKERR).

Belongs to the cyclophilin-type PPIase family. In terms of assembly, part of the activated spliceosome B/catalytic step 1 spliceosome, one of the forms of the spliceosome which has a well-formed active site but still cannot catalyze the branching reaction and is composed at least of 52 proteins, the U2, U5 and U6 snRNAs and the pre-mRNA. Recruited during early steps of activated spliceosome B maturation, it is probably one of the first proteins released from this complex as he matures to the spliceosome C complex. Component of the minor spliceosome, which splices U12-type introns.

It localises to the nucleus. Functionally, as part of the spliceosome, plays a role in pre-mRNA splicing. Probable inactive PPIase with no peptidyl-prolyl cis-trans isomerase activity. As a component of the minor spliceosome, involved in the splicing of U12-type introns in pre-mRNAs. The chain is Spliceosome-associated protein CWC27 homolog from Rattus norvegicus (Rat).